Reading from the N-terminus, the 294-residue chain is 33 kDa chaperonin (294 aa).

2 disulfide bridges follow: Cys-238–Cys-240 and Cys-271–Cys-274.

This sequence belongs to the HSP33 family. Under oxidizing conditions two disulfide bonds are formed involving the reactive cysteines. Under reducing conditions zinc is bound to the reactive cysteines and the protein is inactive.

It is found in the cytoplasm. Functionally, redox regulated molecular chaperone. Protects both thermally unfolding and oxidatively damaged proteins from irreversible aggregation. Plays an important role in the bacterial defense system toward oxidative stress. This chain is 33 kDa chaperonin, found in Clostridium novyi (strain NT).